A 98-amino-acid chain; its full sequence is NADH-ubiquinone oxidoreductase chain 4L (98 aa).

The next 3 membrane-spanning stretches (helical) occupy residues 1–21 (MTPT…GMLI), 26–46 (LMAS…MTAV), and 61–81 (IIML…LVSI).

Belongs to the complex I subunit 4L family. Core subunit of respiratory chain NADH dehydrogenase (Complex I) which is composed of 45 different subunits.

It localises to the mitochondrion inner membrane. The catalysed reaction is a ubiquinone + NADH + 5 H(+)(in) = a ubiquinol + NAD(+) + 4 H(+)(out). Its function is as follows. Core subunit of the mitochondrial membrane respiratory chain NADH dehydrogenase (Complex I) which catalyzes electron transfer from NADH through the respiratory chain, using ubiquinone as an electron acceptor. Part of the enzyme membrane arm which is embedded in the lipid bilayer and involved in proton translocation. This is NADH-ubiquinone oxidoreductase chain 4L (MT-ND4L) from Papio hamadryas (Hamadryas baboon).